We begin with the raw amino-acid sequence, 262 residues long: Acyl-[acyl-carrier-protein]--UDP-N-acetylglucosamine O-acyltransferase (262 aa).

Belongs to the transferase hexapeptide repeat family. LpxA subfamily. In terms of assembly, homotrimer.

It is found in the cytoplasm. It carries out the reaction a (3R)-hydroxyacyl-[ACP] + UDP-N-acetyl-alpha-D-glucosamine = a UDP-3-O-[(3R)-3-hydroxyacyl]-N-acetyl-alpha-D-glucosamine + holo-[ACP]. The protein operates within glycolipid biosynthesis; lipid IV(A) biosynthesis; lipid IV(A) from (3R)-3-hydroxytetradecanoyl-[acyl-carrier-protein] and UDP-N-acetyl-alpha-D-glucosamine: step 1/6. Its function is as follows. Involved in the biosynthesis of lipid A, a phosphorylated glycolipid that anchors the lipopolysaccharide to the outer membrane of the cell. The chain is Acyl-[acyl-carrier-protein]--UDP-N-acetylglucosamine O-acyltransferase from Pectobacterium carotovorum subsp. carotovorum (strain PC1).